The chain runs to 968 residues: RNA polymerase-associated protein RapA (968 aa).

Residues 163 to 332 (EVGQRFAPRV…FARLRLLDPD (170 aa)) form the Helicase ATP-binding domain. Residue 176-183 (DEVGLGKT) participates in ATP binding. A DEAH box motif is present at residues 278–281 (DEAH). The Helicase C-terminal domain maps to 491–678 (RVDWLIDFLK…GTKARYQELK (188 aa)).

The protein belongs to the SNF2/RAD54 helicase family. RapA subfamily. As to quaternary structure, interacts with the RNAP. Has a higher affinity for the core RNAP than for the holoenzyme. Its ATPase activity is stimulated by binding to RNAP.

Its function is as follows. Transcription regulator that activates transcription by stimulating RNA polymerase (RNAP) recycling in case of stress conditions such as supercoiled DNA or high salt concentrations. Probably acts by releasing the RNAP, when it is trapped or immobilized on tightly supercoiled DNA. Does not activate transcription on linear DNA. Probably not involved in DNA repair. This chain is RNA polymerase-associated protein RapA, found in Shewanella pealeana (strain ATCC 700345 / ANG-SQ1).